Consider the following 94-residue polypeptide: FXYD domain-containing ion transport regulator 6 (94 aa).

The signal sequence occupies residues 1 to 17 (METVLILCSLLAPVVLA). Residues 18 to 34 (SAAEKEKEKDPFYYDYQ) are Extracellular-facing. Residues 35–57 (TLRIGGLVFAVVLFSVGILLILS) traverse the membrane as a helical segment. Over 58–94 (RRCKCSFNQKPRAPGDEEAQVENLITTNAAEPQKAEN) the chain is Cytoplasmic.

This sequence belongs to the FXYD family. In terms of assembly, regulatory subunit of the sodium/potassium-transporting ATPase which is composed of a catalytic alpha subunit, a non-catalytic beta subunit and an additional regulatory subunit. The regulatory subunit, a member of the FXYD protein family, modulates the enzymatic activity in a tissue- and isoform-specific way by changing affinities of the Na+/K+-ATPase toward Na(+), K(+) or ATP. As to expression, expressed in the neuronal fibers of the medial part of lateral habenula nucleus, thalamus, hypothalamus, stria terminalis, zona incerta, amygdaloid body and cingulum, olfactory bulb, hippocampus, cerebral cortex and cerebellum. In the cerebellum there is a predominant expression pattern in the granule layer of lobules VI-IX of the posterior lobe. Detected in inner ear.

The protein localises to the cell membrane. In terms of biological role, associates with and regulates the activity of the sodium/potassium-transporting ATPase (NKA) which catalyzes the hydrolysis of ATP coupled with the exchange of Na(+) and K(+) ions across the plasma membrane. Decreases the apparent affinity of the transporter for Na(+). In addition to modulating NKA kinetics, may also function as a regulator of NKA localization to the plasma membrane. The polypeptide is FXYD domain-containing ion transport regulator 6 (Fxyd6) (Rattus norvegicus (Rat)).